The sequence spans 451 residues: UDP-glucosyltransferase 74AE2 (451 aa).

The active-site Proton acceptor is the H17. Residue H17 participates in an anthocyanidin binding. D108 functions as the Charge relay in the catalytic mechanism. UDP-alpha-D-glucose contacts are provided by T130, Q330, H345, W348, N349, S350, E353, D369, and Q370.

It belongs to the UDP-glycosyltransferase family. In terms of tissue distribution, expressed at higher levels in roots than in leaves.

The catalysed reaction is (20S)-ginsenoside C-K + UDP-alpha-D-glucose = (20S)-ginsenoside F2 + UDP + H(+). The enzyme catalyses (20S)-protopanaxadiol + UDP-alpha-D-glucose = (20S)-ginsenoside Rh2 + UDP + H(+). Its pathway is secondary metabolite biosynthesis; terpenoid biosynthesis. Its function is as follows. Component of the dammarane-type triterpene saponins (e.g. PPD-type ginsenosides or panaxosides) biosynthetic pathway. Glycosyltransferase that catalyzes the biosynthesis of ginsenoside Rh2 from protopanaxadiol (PPD) and the conversion of compound K to ginsenoside F2. This is UDP-glucosyltransferase 74AE2 from Panax ginseng (Korean ginseng).